We begin with the raw amino-acid sequence, 161 residues long: Extracellular giant hemoglobin major globin subunit B1 (161 aa).

The N-terminal stretch at 1–16 (MTILVLFLSCAALASA) is a signal peptide. A Globin domain is found at 18–161 (CCSRGDAEVV…YIAAGIGAGL (144 aa)). C19 and C149 are disulfide-bonded. H112 contributes to the heme b binding site.

This sequence belongs to the globin family. The 400 kDa hemoglobin consists of a spherical 24-mer arranged as a double layer of dome-shaped dodecamers. Each dodecamer is composed of the 3-fold trimer of the tetramer A1-A2-B1-B2 having one intra-tetramer (A1-B2) disulfide bond and one inter-tetramer (B1-B2) disulfide bond per tetramer.

The protein resides in the secreted. Functionally, the extracellular giant hemoglobin is able to bind and transport oxygen and sulfide simultaneously and reversibly at two different sites. The sequence is that of Extracellular giant hemoglobin major globin subunit B1 (ghbB1) from Oligobrachia mashikoi (Beard worm).